Consider the following 478-residue polypeptide: GMP reductase (478 aa).

CBS domains follow at residues 95 to 152 (VVDT…VRDI) and 153 to 211 (ALSD…AVDA). Residues 245-247 (DTA) and 295-297 (GVG) contribute to the NADP(+) site. Residue Cys-302 is the Thioimidate intermediate of the active site.

Belongs to the IMPDH/GMPR family. GuaB1 subfamily. As to quaternary structure, homooctamer composed of two tetramers. The oligomerization state is regulated by ligands and pH. The cofactor is a monovalent cation.

It carries out the reaction IMP + NH4(+) + NADP(+) = GMP + NADPH + 2 H(+). It participates in purine metabolism; IMP biosynthesis via salvage pathway. Activity is allosterically regulated by the ATP/GTP ratio in a pH-dependent manner. At pH 7.8, GTP has only a minor positive effect and ATP only a minor negative effect on the activity, however, at lower pH values, the effects of ATP and GTP increase. ATP-dependent inhibition can be restored by increasing GTP concentration. IMP and XMP are competitive inhibitors. Involved in the purine-salvage pathway. Catalyzes the NADPH-dependent conversion of GMP to IMP. Is not essential for viability, but may contribute to the regulation of the purine nucleotide pool by recycling GMP to IMP. In Mycolicibacterium smegmatis (strain ATCC 700084 / mc(2)155) (Mycobacterium smegmatis), this protein is GMP reductase.